A 687-amino-acid chain; its full sequence is Putative ammonium transporter 3 (687 aa).

11 helical membrane passes run 39–59 (AVWI…FGLL), 77–97 (VVDV…FSYG), 134–154 (ASFL…SGAV), 162–182 (SYIL…HWVW), 196–216 (FAGC…ATVF), 240–260 (LGTF…VWGI), 272–292 (AVAT…ISFV), 299–319 (VNFL…ICAV), 323–343 (WHAL…LPLL), 352–372 (VGIV…VGIF), and 404–424 (CTAA…FLIS). Disordered stretches follow at residues 521–544 (RTNA…FNNQ), 549–568 (AVSS…RRTE), and 592–687 (PPEE…NPPV). Residues 549–564 (AVSSTVSTARNGPSTG) show a composition bias toward polar residues. 2 stretches are compositionally biased toward low complexity: residues 614–632 (SPSS…SPSI) and 648–665 (STAS…KNST).

The protein belongs to the ammonia transporter channel (TC 1.A.11.2) family.

The protein resides in the membrane. Functionally, involved in the uptake of ammonia. The protein is Putative ammonium transporter 3 (amt-3) of Caenorhabditis elegans.